Here is a 546-residue protein sequence, read N- to C-terminus: Aladin (546 aa).

Residue Cys-2 is modified to N-acetylcysteine. Ser-33 carries the phosphoserine modification. WD repeat units lie at residues 142 to 180, 183 to 222, 234 to 274, 280 to 316, 324 to 380, 386 to 433, and 442 to 482; these read EFAQVTNWSSCCLRVFAWHPHTNKFAVALLDDSVRVYNA, TIVPSLKHRLQRNVASLAWKPLSASVLAVACQSCILIWTL, GCAQ…VWDV, VPLPWFRGGGVTNLLWSPDGSKILATTPSAVFRVWEA, WPTL…IVAD, IQTP…LFRT, and LPCG…IAHI. Phosphoserine occurs at positions 495, 511, 522, and 525. A disordered region spans residues 500–546; the sequence is RAQEPPAGGGGSIHDLPLFTETSPTSAPWDPLPGPPPVLPHSPHSHL. Pro residues predominate over residues 529-539; sequence DPLPGPPPVLP. Phosphoserine is present on Ser-541. The Microbody targeting signal motif lies at 544-546; sequence SHL.

As to quaternary structure, interacts with NDC1, the interaction is required for nuclear pore localization. Interacts with the inactive form aurora kinase AURKA. Interacts with PGRMC2. As to expression, widely expressed. Particularly abundant in cerebellum, corpus callosum, adrenal gland, pituitary gland, gastrointestinal structures and fetal lung.

It localises to the nucleus. The protein localises to the nuclear pore complex. Its subcellular location is the cytoplasm. The protein resides in the cytoskeleton. It is found in the spindle pole. It localises to the nucleus envelope. In terms of biological role, plays a role in the normal development of the peripheral and central nervous system. Required for the correct localization of aurora kinase AURKA and the microtubule minus end-binding protein NUMA1 as well as a subset of AURKA targets which ensures proper spindle formation and timely chromosome alignment. In Homo sapiens (Human), this protein is Aladin (AAAS).